The sequence spans 64 residues: U-poneritoxin(01)-Om1a (64 aa).

An N-terminal signal peptide occupies residues 1-27 (MKPSGLTFAFLVVFMMAIMYNSVQVTA). The propeptide occupies 28–45 (DADADAEAEALANALAEA). A Methionine amide modification is found at methionine 62.

Truncated sequences of this peptide have also been found in the venom. It is possible they have been cleaved in the venom. Expressed by the venom gland.

The protein resides in the secreted. In terms of biological role, antimicrobial peptide with activities against E.coli (MIC=1.3 uM), S.aureus (MIC=3.1 uM), and S.cerevisiae (MIC=50 uM). Also shows histamine-releasing activity (32.9% at 10 uM). Does not show hemolytic activity, even at 50 uM. It is a short peptide for which no alpha-helical region has been predicted. The sequence is that of U-poneritoxin(01)-Om1a from Odontomachus monticola (Trap-jaw ant).